Here is a 203-residue protein sequence, read N- to C-terminus: Large ribosomal subunit protein uL18 (203 aa).

The protein belongs to the universal ribosomal protein uL18 family. In terms of assembly, part of the 50S ribosomal subunit. Contacts the 5S and 23S rRNAs.

In terms of biological role, this is one of the proteins that bind and probably mediate the attachment of the 5S RNA into the large ribosomal subunit, where it forms part of the central protuberance. The chain is Large ribosomal subunit protein uL18 from Pyrococcus horikoshii (strain ATCC 700860 / DSM 12428 / JCM 9974 / NBRC 100139 / OT-3).